The chain runs to 445 residues: MATILQNLPIGQKVGIAFSGGLDTSAALHWMKLKGAIPYAYTANLGQPDEPDYEDIPRKAMQYGAEQARLIDCRSQLAAEGLAALQAGAFHITTAGVTYFNTTPLGRAVTGTMLVAAMKEDDVNIWGDGSTYKGNDIERFYRYGLLTNPSLKIYKPWLDQLFIDELGGRAEMSEFMTQAGFGYKMSAEKAYSTDSNMLGATHEAKDLEHLSSGMKIVNPIMGVAFWKDEVEVKREEVTVRFEEGRPVALNGVEYPDLVELILEANRIGGRHGLGMSDQIENRIIEAKSRGIYEAPGLALLFIAYERLVTGIHNEDTIEQYRDSGRRLGRLLYQGRWFDSQAIMLRETAQRWVASAITGEVTIELRRGNDYSILNTESANLTYQPERLSMEKVEGAFTPLDRIGQLTMRNLDIVDTRAKLGIYAKSGVLSLGTGGDLLNLTGKAAE.

ATP-binding positions include alanine 17–serine 25 and alanine 43. Tyrosine 99 provides a ligand contact to L-citrulline. Residues glycine 129 and threonine 131 each contribute to the ATP site. Residues threonine 131, asparagine 135, and aspartate 136 each coordinate L-aspartate. Residue asparagine 135 coordinates L-citrulline. Aspartate 136 is an ATP binding site. Arginine 139 and serine 192 together coordinate L-citrulline. ATP is bound at residue aspartate 194. The L-citrulline site is built by threonine 201, glutamate 203, and glutamate 280.

Belongs to the argininosuccinate synthase family. Type 2 subfamily. In terms of assembly, homotetramer.

Its subcellular location is the cytoplasm. The catalysed reaction is L-citrulline + L-aspartate + ATP = 2-(N(omega)-L-arginino)succinate + AMP + diphosphate + H(+). It participates in amino-acid biosynthesis; L-arginine biosynthesis; L-arginine from L-ornithine and carbamoyl phosphate: step 2/3. The chain is Argininosuccinate synthase from Polaromonas naphthalenivorans (strain CJ2).